The primary structure comprises 122 residues: Small ribosomal subunit protein uS13 (122 aa).

The interval 95 to 122 is disordered; the sequence is GLPVRGQRTHTNARTRKGPAKPIAGKKK.

It belongs to the universal ribosomal protein uS13 family. Part of the 30S ribosomal subunit. Forms a loose heterodimer with protein S19. Forms two bridges to the 50S subunit in the 70S ribosome.

Functionally, located at the top of the head of the 30S subunit, it contacts several helices of the 16S rRNA. In the 70S ribosome it contacts the 23S rRNA (bridge B1a) and protein L5 of the 50S subunit (bridge B1b), connecting the 2 subunits; these bridges are implicated in subunit movement. Contacts the tRNAs in the A and P-sites. This Rhodospirillum rubrum (strain ATCC 11170 / ATH 1.1.1 / DSM 467 / LMG 4362 / NCIMB 8255 / S1) protein is Small ribosomal subunit protein uS13.